The primary structure comprises 130 residues: UPF0102 protein TDE_2303 (130 aa).

This sequence belongs to the UPF0102 family.

In Treponema denticola (strain ATCC 35405 / DSM 14222 / CIP 103919 / JCM 8153 / KCTC 15104), this protein is UPF0102 protein TDE_2303.